We begin with the raw amino-acid sequence, 202 residues long: Homeobox protein ceh-13 (202 aa).

Disordered stretches follow at residues 60–83 and 166–202; these read PATA…LPTG and RMKE…KNFK. A compositionally biased stretch (low complexity) spans 63-81; the sequence is ASGLSPPASRSSNSSAELP. Residues 114–173 constitute a DNA-binding region (homeobox); the sequence is NGTNRTNFTTHQLTELEKEFHTAKYVNRTRRTEIASNLKLQEAQVKIWFQNRRMKEKKRE. Polar residues predominate over residues 183–194; sequence TWESNSPTSSCS.

It localises to the nucleus. The polypeptide is Homeobox protein ceh-13 (ceh-13) (Caenorhabditis elegans).